Reading from the N-terminus, the 447-residue chain is Ribosomal protein uS12 methylthiotransferase RimO (447 aa).

In terms of domain architecture, MTTase N-terminal spans 4–114 (PKVGFVSLGC…VMEAVHEYVP (111 aa)). Residues Cys-13, Cys-49, Cys-78, Cys-147, Cys-151, and Cys-154 each coordinate [4Fe-4S] cluster. The Radical SAM core domain maps to 133–370 (LTPKHYAYLK…MQVQQQISAA (238 aa)). A TRAM domain is found at 373–443 (QKRIGQTMTV…EYDLFAKLIK (71 aa)).

The protein belongs to the methylthiotransferase family. RimO subfamily. Requires [4Fe-4S] cluster as cofactor.

It localises to the cytoplasm. The catalysed reaction is L-aspartate(89)-[ribosomal protein uS12]-hydrogen + (sulfur carrier)-SH + AH2 + 2 S-adenosyl-L-methionine = 3-methylsulfanyl-L-aspartate(89)-[ribosomal protein uS12]-hydrogen + (sulfur carrier)-H + 5'-deoxyadenosine + L-methionine + A + S-adenosyl-L-homocysteine + 2 H(+). Its function is as follows. Catalyzes the methylthiolation of an aspartic acid residue of ribosomal protein uS12. This Acinetobacter baumannii (strain AB307-0294) protein is Ribosomal protein uS12 methylthiotransferase RimO.